Consider the following 365-residue polypeptide: Class I histocompatibility antigen, Gogo-A*0201 alpha chain (365 aa).

Residues methionine 1 to alanine 24 form the signal peptide. An alpha-1 region spans residues glycine 25–alanine 114. Over glycine 25–isoleucine 308 the chain is Extracellular. Asparagine 110 carries N-linked (GlcNAc...) asparagine glycosylation. The interval glycine 115–threonine 206 is alpha-2. 2 cysteine pairs are disulfide-bonded: cysteine 125/cysteine 188 and cysteine 227/cysteine 283. The tract at residues aspartate 207–tryptophan 298 is alpha-3. The 87-residue stretch at proline 209 to threonine 295 folds into the Ig-like C1-type domain. The segment at glutamate 299–isoleucine 308 is connecting peptide. Residues valine 309 to tryptophan 332 form a helical membrane-spanning segment. Residues arginine 333 to valine 365 are Cytoplasmic-facing. The disordered stretch occupies residues aspartate 338–valine 365. The segment covering glycine 342–serine 359 has biased composition (low complexity). At serine 343 the chain carries Phosphoserine. The residue at position 344 (tyrosine 344) is a Phosphotyrosine. Phosphoserine occurs at positions 345, 349, 350, 352, 356, and 359.

Belongs to the MHC class I family. In terms of assembly, heterodimer of an alpha chain and a beta chain (beta-2-microglobulin).

The protein localises to the membrane. Its function is as follows. Involved in the presentation of foreign antigens to the immune system. The chain is Class I histocompatibility antigen, Gogo-A*0201 alpha chain from Gorilla gorilla gorilla (Western lowland gorilla).